The chain runs to 629 residues: tRNA uridine 5-carboxymethylaminomethyl modification enzyme MnmG (629 aa).

FAD-binding positions include 13 to 18, Val-125, and Ser-180; that span reads GGGHAG. An NAD(+)-binding site is contributed by 273 to 287; that stretch reads GPRYCPSIEDKVMRF. Residue Gln-370 coordinates FAD.

Belongs to the MnmG family. As to quaternary structure, homodimer. Heterotetramer of two MnmE and two MnmG subunits. FAD is required as a cofactor.

It is found in the cytoplasm. Functionally, NAD-binding protein involved in the addition of a carboxymethylaminomethyl (cmnm) group at the wobble position (U34) of certain tRNAs, forming tRNA-cmnm(5)s(2)U34. This Enterobacter sp. (strain 638) protein is tRNA uridine 5-carboxymethylaminomethyl modification enzyme MnmG.